Consider the following 136-residue polypeptide: Small cardioactive peptides (136 aa).

The N-terminal stretch at 1 to 24 is a signal peptide; that stretch reads METSVSRVTVSLTLLVLIICSADA. Methionine amide is present on residues M33 and M46. Residues 49-135 constitute a propeptide, carboxy-terminal peptide; it reads SQMKTETGTD…VLSKLKSLLQ (87 aa).

It belongs to the SCP family. Post-translationally, contains three disulfide bonds. Highly expressed in the buccal ganglion.

It is found in the secreted. Involved in the stimulation of contractile activity in the gut, the increase of the amplitude of the heart beat, and enhancement of the contractile response of the radula closer muscle. The protein is Small cardioactive peptides of Aplysia californica (California sea hare).